The primary structure comprises 510 residues: Beta-galactosidase (510 aa).

Glutamate 210 acts as the Proton donor in catalysis. Glutamate 414 (nucleophile) is an active-site residue.

It belongs to the glycosyl hydrolase 1 family.

The enzyme catalyses Hydrolysis of terminal non-reducing beta-D-galactose residues in beta-D-galactosides.. This is Beta-galactosidase from Pyrococcus woesei.